Here is a 151-residue protein sequence, read N- to C-terminus: Putative pre-16S rRNA nuclease (151 aa).

Belongs to the YqgF nuclease family.

The protein localises to the cytoplasm. In terms of biological role, could be a nuclease involved in processing of the 5'-end of pre-16S rRNA. This chain is Putative pre-16S rRNA nuclease, found in Pelagibacter ubique (strain HTCC1062).